Here is a 565-residue protein sequence, read N- to C-terminus: UvrABC system protein C (565 aa).

The 78-residue stretch at 12 to 89 folds into the GIY-YIG domain; sequence EEPGVYIFKN…IRTHKPKYNV (78 aa). The region spanning 195 to 230 is the UVR domain; it reads KDVLPTLYEKIEQYASNLAFEKAAFLRDQVLVLQNI.

The protein belongs to the UvrC family. As to quaternary structure, interacts with UvrB in an incision complex.

The protein localises to the cytoplasm. Its function is as follows. The UvrABC repair system catalyzes the recognition and processing of DNA lesions. UvrC both incises the 5' and 3' sides of the lesion. The N-terminal half is responsible for the 3' incision and the C-terminal half is responsible for the 5' incision. The protein is UvrABC system protein C of Hydrogenobaculum sp. (strain Y04AAS1).